The following is a 204-amino-acid chain: Small ribosomal subunit protein uS4 (204 aa).

Residues Ala25 to Ser45 form a disordered region. Residues Met92–Glu152 enclose the S4 RNA-binding domain.

This sequence belongs to the universal ribosomal protein uS4 family. As to quaternary structure, part of the 30S ribosomal subunit. Contacts protein S5. The interaction surface between S4 and S5 is involved in control of translational fidelity.

One of the primary rRNA binding proteins, it binds directly to 16S rRNA where it nucleates assembly of the body of the 30S subunit. In terms of biological role, with S5 and S12 plays an important role in translational accuracy. This Cyanothece sp. (strain PCC 7425 / ATCC 29141) protein is Small ribosomal subunit protein uS4.